The chain runs to 185 residues: Elongation factor P (185 aa).

Belongs to the elongation factor P family.

The protein resides in the cytoplasm. Its pathway is protein biosynthesis; polypeptide chain elongation. In terms of biological role, involved in peptide bond synthesis. Stimulates efficient translation and peptide-bond synthesis on native or reconstituted 70S ribosomes in vitro. Probably functions indirectly by altering the affinity of the ribosome for aminoacyl-tRNA, thus increasing their reactivity as acceptors for peptidyl transferase. In Deinococcus deserti (strain DSM 17065 / CIP 109153 / LMG 22923 / VCD115), this protein is Elongation factor P.